The following is a 518-amino-acid chain: MISWGLSCLSVLGAAGTTLLCAGLLLGLAQQLWTLRWTLSRDWASTLPLPKGSMGWPFFGETLHWLVQGSRFHSSRRERYGTVFKTHLLGRPVIRVSGAENVRTILLGEHRLVRSQWPQSAHILLGSHTLLGAVGEPHRQRRKVLARVFSRSSLEQFVPRLQGALRREVRSWCAAQRPVAVYQAAKALTFRMAARILLGLQLDEARCTELAHTFEQLVENLFSLPLDVPFSGLRKGIRARDQLYEHLDEAVAEKLQEKQTAEPGDALLLIINSARELGHEPSVQELKELAVELLFAAFFTTASASTSLILLLLQHPAAITKIQQELSAQGLGRACTCTPRASGSPPDCGCEPDLSLAMLGRLRYVDCVVKEVLRLLPPVSGGYRTALRTFELDGYQIPKGWSVMYSIRDTHETAAVYRSPPEGFDPERFGVESGDARGSGGRFHYIPFGGGARSCLGQELAQAVLQLLAVELVRTARWELATPAFPVMQTVPIVHPVDGLLLFFHPLPTSGAGDGLPF.

Residues 293-313 (LLFAAFFTTASASTSLILLLL) traverse the membrane as a helical segment. C455 provides a ligand contact to heme.

Belongs to the cytochrome P450 family. It depends on heme as a cofactor.

The protein localises to the membrane. It catalyses the reaction an organic molecule + reduced [NADPH--hemoprotein reductase] + O2 = an alcohol + oxidized [NADPH--hemoprotein reductase] + H2O + H(+). The catalysed reaction is all-trans-retinoate + reduced [NADPH--hemoprotein reductase] + O2 = all-trans-4-hydroxyretinoate + oxidized [NADPH--hemoprotein reductase] + H2O + H(+). It carries out the reaction all-trans-4-hydroxyretinoate + reduced [NADPH--hemoprotein reductase] + O2 = all-trans-4-oxoretinoate + oxidized [NADPH--hemoprotein reductase] + 2 H2O + H(+). The enzyme catalyses 9-cis-retinoate + reduced [NADPH--hemoprotein reductase] + O2 = 9-cis-4-hydroxyretinoate + oxidized [NADPH--hemoprotein reductase] + H2O + H(+). It catalyses the reaction 9-cis-4-hydroxyretinoate + reduced [NADPH--hemoprotein reductase] + O2 = 9-cis-4-oxoretinoate + oxidized [NADPH--hemoprotein reductase] + 2 H2O + H(+). The catalysed reaction is all-trans-4-hydroxy-13,14-dihydroretinoate + reduced [NADPH--hemoprotein reductase] + O2 = all-trans-4-oxo-13,14-dihydroretinoate + oxidized [NADPH--hemoprotein reductase] + 2 H2O + H(+). It carries out the reaction all-trans-13,14-dihydroretinoate + reduced [NADPH--hemoprotein reductase] + O2 = all-trans-4-hydroxy-13,14-dihydroretinoate + oxidized [NADPH--hemoprotein reductase] + H2O + H(+). Its function is as follows. A cytochrome P450 monooxygenase involved in the metabolism of retinoates (RAs), the active metabolites of vitamin A, and critical signaling molecules in animals. RAs exist as at least four different isomers: all-trans-RA (atRA), 9-cis-RA, 13-cis-RA, and 9,13-dicis-RA, where atRA is considered to be the biologically active isomer, although 9-cis-RA and 13-cis-RA also have activity. Catalyzes the oxidation of atRA primarily at C-4. Oxidation of atRA limits its biological activity and initiates a degradative process leading to its eventual elimination, thereby contributes to the regulation of atRA homeostasis and signaling. Able to metabolize other RAs such as 9-cis with high efficiency. Can oxidize all-trans-13,14-dihydroretinoate (DRA) to metabolites which could include all-trans-4-oxo-DRA, all-trans-4-hydroxy-DRA, all-trans-5,8-epoxy-DRA, and all-trans-18-hydroxy-DRA. Shares sequence similarity with other CYP26 family members, but has higher affinity to 9-cis-RA and is much less sensitive to the inhibitory effects of ketoconazole. In cooperation with Cyp26a1, contributes to the CNS patterning and the development of regions of higher visual acuity. The sequence is that of Cytochrome P450 26C1 from Mus musculus (Mouse).